The chain runs to 514 residues: Double-stranded RNA-binding protein 6 (514 aa).

2 DRBM domains span residues 1–70 (MYKN…ALAR) and 87–155 (VYKN…SLRQ). 2 disordered regions span residues 195–268 (NNPH…SRFP) and 455–496 (EASQ…KDDH). Polar residues-rich tracts occupy residues 216-225 (FPQSSHSSYS), 249-263 (AASQ…SPNP), and 473-484 (SPDSLPKTQLKT).

Binds double-stranded RNA. This Oryza sativa subsp. japonica (Rice) protein is Double-stranded RNA-binding protein 6 (DRB6).